The chain runs to 274 residues: Large ribosomal subunit protein uL2cz/uL2cy (274 aa).

The disordered stretch occupies residues 224–253; that stretch reads NPIDHPHGGGEGRAPIGRKKPTTPWGYPAL.

The protein belongs to the universal ribosomal protein uL2 family. Part of the 50S ribosomal subunit.

It is found in the plastid. The polypeptide is Large ribosomal subunit protein uL2cz/uL2cy (rpl2-A) (Epifagus virginiana (Beechdrops)).